Here is a 1083-residue protein sequence, read N- to C-terminus: DNA primase (1083 aa).

A CHC2-type zinc finger spans residues 1022 to 1061 (CLRYPHRGGRTAPRTFVSLRVDHHNRLCISLAQQCFATKC).

Belongs to the herpesviridae DNA primase family. As to quaternary structure, associates with the helicase and the primase-associated factor to form the helicase-primase factor.

The protein localises to the host nucleus. In terms of biological role, essential component of the helicase/primase complex. Unwinds the DNA at the replication forks and generates single-stranded DNA for both leading and lagging strand synthesis. The primase initiates primer synthesis and thereby produces large amount of short RNA primers on the lagging strand that the polymerase elongates using dNTPs. This is DNA primase from Homo sapiens (Human).